Consider the following 339-residue polypeptide: Phenylalanine--tRNA ligase alpha subunit (339 aa).

Glutamate 254 contributes to the Mg(2+) binding site.

It belongs to the class-II aminoacyl-tRNA synthetase family. Phe-tRNA synthetase alpha subunit type 1 subfamily. Tetramer of two alpha and two beta subunits. Mg(2+) is required as a cofactor.

Its subcellular location is the cytoplasm. It catalyses the reaction tRNA(Phe) + L-phenylalanine + ATP = L-phenylalanyl-tRNA(Phe) + AMP + diphosphate + H(+). The sequence is that of Phenylalanine--tRNA ligase alpha subunit from Clostridium tetani (strain Massachusetts / E88).